The sequence spans 63 residues: MSETATAYKLFRCLQCGFEYDEAIGWPDDGIEPGTRWDEIPEDWSCPDCGAAKVDFEMVEVDR.

Positions 8–59 (YKLFRCLQCGFEYDEAIGWPDDGIEPGTRWDEIPEDWSCPDCGAAKVDFEMV) constitute a Rubredoxin-like domain. Fe cation is bound by residues Cys13, Cys16, Cys46, and Cys49.

It belongs to the rubredoxin family. Fe(3+) serves as cofactor.

Functionally, involved in the hydrocarbon hydroxylating system, which transfers electrons from NADH to rubredoxin reductase and then through rubredoxin to alkane 1 monooxygenase. This Rhodococcus erythropolis (Arthrobacter picolinophilus) protein is Rubredoxin-2 (rubA2).